Here is a 1356-residue protein sequence, read N- to C-terminus: Partitioning defective 3 homolog (1356 aa).

The residue at position 25 (serine 25) is a Phosphoserine. Disordered regions lie at residues 81–100 (EQDP…GTQS) and 154–262 (SVSD…GLEH). Residue threonine 91 is modified to Phosphothreonine. The span at 91–100 (TSASSTGTQS) shows a compositional bias: low complexity. Polar residues-rich tracts occupy residues 154-163 (SVSDSNFSSE) and 171-187 (TRWS…TAGS). A phosphoserine mark is found at serine 156 and serine 174. Basic and acidic residues predominate over residues 190–203 (TCDRKKDENYRSLP). Residues 204–224 (RDTSNWSNQFQRDNARSSLSA) show a composition bias toward polar residues. The span at 246 to 260 (DNSRVEPVGHADTGL) shows a compositional bias: basic and acidic residues. The PDZ 1 domain maps to 271 to 359 (MVKLVEVPND…TPIIWFHVVP (89 aa)). Residue serine 383 is modified to Phosphoserine. The tract at residues 408–448 (LNHPPEQIDSHSRLPHSAHPSGKPPSAPASAPQNVFSTTVS) is disordered. PDZ domains lie at 461–546 (NIQL…LVFR) and 590–677 (EVPL…GMIQ). At tyrosine 489 the chain carries Phosphotyrosine. A phosphoserine mark is found at serine 692, serine 695, serine 715, serine 728, alanine 792, serine 809, and serine 827. Residues 712–936 (RRISHSLYSG…AAIDKSYDKP (225 aa)) are interaction with PRKCI and PRKCZ. Lysine 834 carries the post-translational modification N6-acetyllysine. A Phosphoserine modification is found at serine 837. Lysine 851 is subject to N6-acetyllysine. Phosphoserine occurs at positions 852 and 873. Disordered regions lie at residues 865–886 (TVDD…GLKK) and 932–1025 (SYDK…DMFR). N6-acetyllysine is present on lysine 885. An interaction with FRMD4A region spans residues 935–1356 (KPAVDDDDEG…TPEKGRPFYS (422 aa)). The segment covering 939 to 953 (DDDDEGMETLEEDTE) has biased composition (acidic residues). Serine 962 is subject to Phosphoserine; by AURKA. Over residues 968–982 (DQPSHSLERQMNGNQ) the composition is skewed to polar residues. Phosphoserine occurs at positions 971 and 973. Residues 983-1009 (EKGDKTDRKKDKTGKEKKKDRDKEKDK) are compositionally biased toward basic and acidic residues. Phosphoserine is present on serine 1046. A coiled-coil region spans residues 1049-1077 (SEEERIRMKQEQERIQAKTREFRERQARE). Positions 1129-1356 (QVKKPRNSKP…TPEKGRPFYS (228 aa)) are disordered. Over residues 1136–1149 (SKPSPVDSNRSTPS) the composition is skewed to polar residues. The span at 1150 to 1177 (NHDRIQRLRQEFQQAKQDEDVEDRRRTY) shows a compositional bias: basic and acidic residues. 3 coiled-coil regions span residues 1151–1174 (HDRI…EDRR), 1201–1224 (VQMQ…YSSL), and 1280–1301 (MLET…MKKQ). Over residues 1196–1205 (SVSVEVQMQR) the composition is skewed to low complexity. Residues 1221 to 1245 (YSSLPRQSRKNASSVSQDSWEQNYS) show a composition bias toward polar residues. Over residues 1285 to 1298 (ELLRQEQRRKEQQM) the composition is skewed to basic and acidic residues. Residues 1337-1346 (SQVARLNRLQ) show a composition bias toward polar residues. Positions 1347-1356 (TPEKGRPFYS) are enriched in basic and acidic residues. Lysine 1350 bears the N6-acetyllysine mark.

This sequence belongs to the PAR3 family. Interacts (via PDZ 1 domain) with F11R/JAM1, PARD6A and PARD6B. Interacts with PRCKI and CDH5. Interacts (via PDZ 3 domain) with PTEN (via C-terminus). Part of a complex with PARD6A or PARD6B, PRKCI or PRKCZ and CDC42 or RAC1. Component of a complex whose core is composed of ARHGAP17, AMOT, PALS1, PATJ and PARD3/PAR3. Interacts with LIMK2, AURKA and AURKB. Component of the Par polarity complex, composed of at least phosphorylated PRKCZ, PARD3 and TIAM1. Directly interacts with TIAM1 and TIAM2. Interacts with ECT2, FBF1 and SIRT2. Interacts (via coiled-coil domain) with FRMD4A. Found in a complex with PARD3, CYTH1 and FRMD4A. Interacts with SAPCD2. Interacts with PRKCA. As to quaternary structure, interacts with PRKCZ. In terms of processing, acetylated. Deacetylated by SIRT2, thereby inhibiting Schwann cell peripheral myelination. Post-translationally, phosphorylation at Ser-827 by PRKCZ and PRKCI occurs at the most apical tip of epithelial cell-cell contacts during the initial phase of tight junction formation and may promote dissociation of the complex with PARD6. EGF-induced Tyr-1127 phosphorylation mediates dissociation from LIMK2. Phosphorylation by AURKA at Ser-962 is required for the normal establishment of neuronal polarity. As to expression, widely expressed.

The protein resides in the cytoplasm. Its subcellular location is the endomembrane system. It localises to the cell junction. The protein localises to the tight junction. It is found in the adherens junction. The protein resides in the cell membrane. Its subcellular location is the cell cortex. It localises to the cytoskeleton. Its function is as follows. Adapter protein involved in asymmetrical cell division and cell polarization processes. Seems to play a central role in the formation of epithelial tight junctions. Targets the phosphatase PTEN to cell junctions. Involved in Schwann cell peripheral myelination. Association with PARD6B may prevent the interaction of PARD3 with F11R/JAM1, thereby preventing tight junction assembly. The PARD6-PARD3 complex links GTP-bound Rho small GTPases to atypical protein kinase C proteins. Required for establishment of neuronal polarity and normal axon formation in cultured hippocampal neurons. This is Partitioning defective 3 homolog from Homo sapiens (Human).